Reading from the N-terminus, the 202-residue chain is Small ribosomal subunit protein uS4 (202 aa).

The segment at 18-42 (LPGLTRKAAKRSYPPGQHGQARRKR) is disordered. Residues 90–152 (NRLDNVCFRL…KPSKKLAETN (63 aa)) form the S4 RNA-binding domain.

This sequence belongs to the universal ribosomal protein uS4 family. In terms of assembly, part of the 30S ribosomal subunit. Contacts protein S5. The interaction surface between S4 and S5 is involved in control of translational fidelity.

In terms of biological role, one of the primary rRNA binding proteins, it binds directly to 16S rRNA where it nucleates assembly of the body of the 30S subunit. Functionally, with S5 and S12 plays an important role in translational accuracy. This chain is Small ribosomal subunit protein uS4, found in Synechococcus sp. (strain RCC307).